A 143-amino-acid polypeptide reads, in one-letter code: MAASRVFAQRLASTMKVARPAARIQARTLTTQRMATPFQTIKRQQPSMIQASARQAFAARRQYSSEIADAMVQVSQNIGMGSAAIGLGGAGIGIGVVFGSLLLAVSRNPALRGQLFSYAILGFAFVEAIGLFDLMVAMMCKYV.

The N-terminal 62 residues, 1 to 62 (MAASRVFAQR…ARQAFAARRQ (62 aa)), are a transit peptide targeting the mitochondrion. 2 consecutive transmembrane segments (helical) span residues 85-105 (IGLG…LLAV) and 119-139 (AILG…VAMM).

The protein belongs to the ATPase C chain family. In terms of assembly, F-type ATPases have 2 components, CF(1) - the catalytic core - and CF(0) - the membrane proton channel. CF(1) has five subunits: alpha(3), beta(3), gamma(1), delta(1), epsilon(1). CF(0) has three main subunits: a, b and c.

It localises to the mitochondrion membrane. Mitochondrial membrane ATP synthase (F(1)F(0) ATP synthase or Complex V) produces ATP from ADP in the presence of a proton gradient across the membrane which is generated by electron transport complexes of the respiratory chain. F-type ATPases consist of two structural domains, F(1) - containing the extramembraneous catalytic core and F(0) - containing the membrane proton channel, linked together by a central stalk and a peripheral stalk. During catalysis, ATP synthesis in the catalytic domain of F(1) is coupled via a rotary mechanism of the central stalk subunits to proton translocation. Part of the complex F(0) domain. A homomeric c-ring of probably 10 subunits is part of the complex rotary element. The protein is ATP synthase subunit 9, mitochondrial (atp9) of Emericella nidulans (strain FGSC A4 / ATCC 38163 / CBS 112.46 / NRRL 194 / M139) (Aspergillus nidulans).